We begin with the raw amino-acid sequence, 183 residues long: Ribulose bisphosphate carboxylase small subunit, chloroplastic 3 (183 aa).

Residues 1 to 57 (MASSLMSNAATTMAAATTTAQANMVAPFNGLKSVSAFPVTRKNNDITSVASNGGRVQ) constitute a chloroplast transit peptide.

Belongs to the RuBisCO small chain family. Heterohexadecamer of 8 large and 8 small subunits.

It is found in the plastid. It localises to the chloroplast. In terms of biological role, ruBisCO catalyzes two reactions: the carboxylation of D-ribulose 1,5-bisphosphate, the primary event in carbon dioxide fixation, as well as the oxidative fragmentation of the pentose substrate. Both reactions occur simultaneously and in competition at the same active site. Although the small subunit is not catalytic it is essential for maximal activity. The polypeptide is Ribulose bisphosphate carboxylase small subunit, chloroplastic 3 (Mesembryanthemum crystallinum (Common ice plant)).